Consider the following 599-residue polypeptide: Exocyst complex component EXO70B2 (599 aa).

Positions 38–58 (GASGNRGGDPRPTPSRGGSNV) are disordered.

The protein belongs to the EXO70 family. As to quaternary structure, self interacts. Interacts with EXO70B1. Interacts with the exocyst subunits EXO70H1, SEC5A and SEC15B. Binds to SNAP33. Subunit of the exocyst complex that mediates vesicle tethering during exocytosis. Binds to PUB22. In terms of processing, target of the E3 ubiquitin-protein ligase PUB22 that mediates its ubiquitination and degradation via the 26S proteasome to attenuate pathogen-associated molecular patterns (PAMP)-induced signaling, especially is response to the bacterial elicitor flg22. As to expression, mostly expressed in leaves and, to a lower extent, in roots, cotyledons, internodes, flower buds, siliques and anthers.

The protein resides in the cytoplasmic vesicle. Its subcellular location is the phagosome. It is found in the cytoplasm. It localises to the nucleus. Component of an exocyst subcomplex specifically involved in autophagy-related, Golgi-independent membrane traffic to the vacuole. Regulates autophagosome formation and autophagy-related Golgi-independent import into the vacuole. Positive regulator of defense responses to pathogenic bacteria (e.g. P.syringae pv. maculicola), to the biotrophic oomycete H.arabidopsidis and to fungi (e.g. B.graminis hordei), especially in cell wall apposition formation related to plant defense. Required for both immediate and later responses triggered by pathogen-associated molecular patterns (PAMPs). Positive regulator of abscisic acid (ABA)-independent mannitol (drought)-promoted stomatal closure. This Arabidopsis thaliana (Mouse-ear cress) protein is Exocyst complex component EXO70B2.